Consider the following 491-residue polypeptide: Acetylcholine receptor subunit epsilon (491 aa).

An N-terminal signal peptide occupies residues 1–20; the sequence is MAGALLCALLLLQLLGRGEG. At 21–239 the chain is on the extracellular side; the sequence is KNEELRLYHY…VIYSLIIRRK (219 aa). Residues Asn-86 and Asn-161 are each glycosylated (N-linked (GlcNAc...) asparagine). Cys-148 and Cys-162 form a disulfide bridge. A helical transmembrane segment spans residues 240 to 264; that stretch reads PLFYVINIIVPCVLISGLVLLAYFL. The Cytoplasmic portion of the chain corresponds to 265-272; it reads PAQAGGQK. Residues 273-291 form a helical membrane-spanning segment; the sequence is CTVSINVLLAQTVFLFLIA. Topologically, residues 292 to 306 are extracellular; it reads QKTPETSLSVPLLGR. A helical transmembrane segment spans residues 307–328; sequence YLIFVMVVATLIVMNCVIVLNV. Residues 329-456 are Cytoplasmic-facing; that stretch reads SLRTPTTHAM…WVRMGKALDS (128 aa). Residues 457–480 form a helical membrane-spanning segment; that stretch reads ICFWAALVLFLVGSSLIFLGAYFN. Over 481–491 the chain is Extracellular; that stretch reads RVPQLPYPPCM.

The protein belongs to the ligand-gated ion channel (TC 1.A.9) family. Acetylcholine receptor (TC 1.A.9.1) subfamily. Epsilon/CHRNE sub-subfamily.

The protein resides in the postsynaptic cell membrane. It is found in the cell membrane. It carries out the reaction K(+)(in) = K(+)(out). The enzyme catalyses Na(+)(in) = Na(+)(out). Functionally, after binding acetylcholine, the AChR responds by an extensive change in conformation that affects all subunits and leads to opening of an ion-conducting channel across the plasma membrane. This is Acetylcholine receptor subunit epsilon (CHRNE) from Bos taurus (Bovine).